Consider the following 124-residue polypeptide: Translation initiation factor 5A (124 aa).

Positions 27 to 53 (TSYSTSKPGKHGSAKARVEGTGVFDGQ) are disordered. At Lys-36 the chain carries Hypusine.

It belongs to the eIF-5A family.

Its subcellular location is the cytoplasm. Functions by promoting the formation of the first peptide bond. This Natronomonas pharaonis (strain ATCC 35678 / DSM 2160 / CIP 103997 / JCM 8858 / NBRC 14720 / NCIMB 2260 / Gabara) (Halobacterium pharaonis) protein is Translation initiation factor 5A.